The following is a 205-amino-acid chain: Adenylyl-sulfate kinase (205 aa).

39–46 (GLSGAGKS) serves as a coordination point for ATP. S113 serves as the catalytic Phosphoserine intermediate.

Belongs to the APS kinase family.

The catalysed reaction is adenosine 5'-phosphosulfate + ATP = 3'-phosphoadenylyl sulfate + ADP + H(+). Its pathway is sulfur metabolism; hydrogen sulfide biosynthesis; sulfite from sulfate: step 2/3. Its function is as follows. Catalyzes the synthesis of activated sulfate. This Vibrio parahaemolyticus serotype O3:K6 (strain RIMD 2210633) protein is Adenylyl-sulfate kinase.